The sequence spans 78 residues: Large ribosomal subunit protein uL23 (78 aa).

The protein belongs to the universal ribosomal protein uL23 family. As to quaternary structure, part of the 50S ribosomal subunit. Contacts protein L29.

Binds to 23S rRNA. One of the proteins that surrounds the polypeptide exit tunnel on the outside of the ribosome. The sequence is that of Large ribosomal subunit protein uL23 from Nanoarchaeum equitans (strain Kin4-M).